The sequence spans 173 residues: Shikimate kinase 2 (173 aa).

ATP is bound at residue 12–17 (GCGKTT). Mg(2+) contacts are provided by T16 and D32. Substrate contacts are provided by D34, R58, and G79. The segment at 112–126 (QASPQAHQRPTLTGR) is LID domain. R120 lines the ATP pocket. R139 provides a ligand contact to substrate. Q155 lines the ATP pocket.

As to quaternary structure, monomer. Mg(2+) serves as cofactor.

The protein resides in the cytoplasm. It carries out the reaction shikimate + ATP = 3-phosphoshikimate + ADP + H(+). Its pathway is metabolic intermediate biosynthesis; chorismate biosynthesis; chorismate from D-erythrose 4-phosphate and phosphoenolpyruvate: step 5/7. Inhibited by chloride and sulfate ions. Functionally, catalyzes the specific phosphorylation of the 3-hydroxyl group of shikimic acid using ATP as a cosubstrate. The sequence is that of Shikimate kinase 2 (aroL) from Dickeya chrysanthemi (Pectobacterium chrysanthemi).